Here is a 172-residue protein sequence, read N- to C-terminus: MSEKEKKELTQECEELKEKYKELEEYAKRLKAEYENYREEVAREKRELIKNANEYLISKLIPVLDDFERALNQGEKGDAFYEGVKMIYKKLLNVLEKEGLTKIHVGEKFDPFEHEAVERVETEDVEEYTILEVVESGYKFHGKVLKPAKVKVAVKPRKKEERKVEEPSDKKE.

Belongs to the GrpE family. Homodimer.

The protein localises to the cytoplasm. Participates actively in the response to hyperosmotic and heat shock by preventing the aggregation of stress-denatured proteins, in association with DnaK and GrpE. It is the nucleotide exchange factor for DnaK and may function as a thermosensor. Unfolded proteins bind initially to DnaJ; upon interaction with the DnaJ-bound protein, DnaK hydrolyzes its bound ATP, resulting in the formation of a stable complex. GrpE releases ADP from DnaK; ATP binding to DnaK triggers the release of the substrate protein, thus completing the reaction cycle. Several rounds of ATP-dependent interactions between DnaJ, DnaK and GrpE are required for fully efficient folding. This Thermotoga maritima (strain ATCC 43589 / DSM 3109 / JCM 10099 / NBRC 100826 / MSB8) protein is Protein GrpE.